The sequence spans 101 residues: DNA-binding protein Fis (101 aa).

The H-T-H motif DNA-binding region spans 77-96; that stretch reads QTRAANMLGINRGTLRKKLK.

It belongs to the transcriptional regulatory Fis family. In terms of assembly, homodimer.

Activates ribosomal RNA transcription. Plays a direct role in upstream activation of rRNA promoters. The chain is DNA-binding protein Fis from Shewanella amazonensis (strain ATCC BAA-1098 / SB2B).